The following is a 305-amino-acid chain: Pseudouridine-5'-phosphate glycosidase (305 aa).

Residue glutamate 22 is the Proton donor of the active site. Substrate contacts are provided by lysine 84 and valine 104. A Mn(2+)-binding site is contributed by aspartate 136. Substrate is bound at residue 138 to 140 (SAD). Lysine 157 (nucleophile) is an active-site residue.

This sequence belongs to the pseudouridine-5'-phosphate glycosidase family. In terms of assembly, homotrimer. It depends on Mn(2+) as a cofactor.

The catalysed reaction is D-ribose 5-phosphate + uracil = psi-UMP + H2O. Functionally, catalyzes the reversible cleavage of pseudouridine 5'-phosphate (PsiMP) to ribose 5-phosphate and uracil. Functions biologically in the cleavage direction, as part of a pseudouridine degradation pathway. This Chloroflexus aurantiacus (strain ATCC 29364 / DSM 637 / Y-400-fl) protein is Pseudouridine-5'-phosphate glycosidase.